Here is an 86-residue protein sequence, read N- to C-terminus: Neurotoxin LmNaTx1 (86 aa).

Positions 1-18 (MKILIIFVIAITVVGVQS) are cleaved as a signal peptide. The LCN-type CS-alpha/beta domain maps to 19–85 (KDGYPIYSTG…VWTYAENTCG (67 aa)). Intrachain disulfides connect Cys33-Cys84, Cys37-Cys58, Cys44-Cys65, and Cys48-Cys67. Cys84 is subject to Cysteine amide.

Belongs to the long (4 C-C) scorpion toxin superfamily. Sodium channel inhibitor family. Beta subfamily. In terms of tissue distribution, expressed by the venom gland.

It localises to the secreted. Binds voltage-independently at site-4 of sodium channels (Nav) and shift the voltage of activation toward more negative potentials thereby affecting sodium channel activation and promoting spontaneous and repetitive firing. The protein is Neurotoxin LmNaTx1 of Lychas mucronatus (Chinese swimming scorpion).